The sequence spans 98 residues: Hainantoxin-XVII-2 (98 aa).

Positions 1-40 (MTTVGVSLFRRSPEKITMKIATFLGLSFLLIASYVLICEA) are cleaved as a signal peptide. Residues 41–64 (QHPGFQELLILEENMRDPENSKER) constitute a propeptide that is removed on maturation. 2 disulfide bridges follow: Cys-66–Cys-81 and Cys-73–Cys-85.

This sequence belongs to the hainantoxin family. 17 subfamily. In terms of tissue distribution, expressed by the venom gland.

It is found in the secreted. Functionally, putative ion channel inhibitor. The polypeptide is Hainantoxin-XVII-2 (Cyriopagopus hainanus (Chinese bird spider)).